We begin with the raw amino-acid sequence, 762 residues long: N,N-dimethylformamidase beta subunit (762 aa).

Heterotetramer of two DmfA1 (alpha) and two DmfA2 (beta) subunits.

It carries out the reaction N,N-dimethylformamide + H2O = dimethylamine + formate. In terms of biological role, hydrolyzes N,N-dimethylformamide, and to a lesser extent N,N-dimethylacetamide and N,N-diethylacetamide. Has no activity against the substituted amides N-methylformamide, N-ethylformamide, N-ethylformamide and N-methylacetamide or the unsubstituted amides formamide, nicotinamide, acetoamide, benzamide, acetamide and acrylamide. The sequence is that of N,N-dimethylformamidase beta subunit from Paracoccus aminophilus.